Reading from the N-terminus, the 441-residue chain is Ribosomal protein uS12 methylthiotransferase RimO (441 aa).

In terms of domain architecture, MTTase N-terminal spans 7 to 117 (PKISFVSLGC…VLDAVHRAKP (111 aa)). Positions 16, 52, 81, 148, 152, and 155 each coordinate [4Fe-4S] cluster. Residues 134 to 371 (LTPRHYAYLK…MARQQAISAR (238 aa)) enclose the Radical SAM core domain. Residues 374–440 (KRKVGTRQQI…AYDLHGTVAG (67 aa)) enclose the TRAM domain.

The protein belongs to the methylthiotransferase family. RimO subfamily. Requires [4Fe-4S] cluster as cofactor.

The protein localises to the cytoplasm. It catalyses the reaction L-aspartate(89)-[ribosomal protein uS12]-hydrogen + (sulfur carrier)-SH + AH2 + 2 S-adenosyl-L-methionine = 3-methylsulfanyl-L-aspartate(89)-[ribosomal protein uS12]-hydrogen + (sulfur carrier)-H + 5'-deoxyadenosine + L-methionine + A + S-adenosyl-L-homocysteine + 2 H(+). Its function is as follows. Catalyzes the methylthiolation of an aspartic acid residue of ribosomal protein uS12. The sequence is that of Ribosomal protein uS12 methylthiotransferase RimO from Rhodopseudomonas palustris (strain HaA2).